The following is a 768-amino-acid chain: Ribosomal RNA large subunit methyltransferase K/L (768 aa).

In terms of domain architecture, THUMP spans 60-175; that stretch reads DLYKICLWSR…DKQAELYLDL (116 aa).

This sequence belongs to the methyltransferase superfamily. RlmKL family.

Its subcellular location is the cytoplasm. It catalyses the reaction guanosine(2445) in 23S rRNA + S-adenosyl-L-methionine = N(2)-methylguanosine(2445) in 23S rRNA + S-adenosyl-L-homocysteine + H(+). It carries out the reaction guanosine(2069) in 23S rRNA + S-adenosyl-L-methionine = N(2)-methylguanosine(2069) in 23S rRNA + S-adenosyl-L-homocysteine + H(+). Functionally, specifically methylates the guanine in position 2445 (m2G2445) and the guanine in position 2069 (m7G2069) of 23S rRNA. This chain is Ribosomal RNA large subunit methyltransferase K/L, found in Psychrobacter arcticus (strain DSM 17307 / VKM B-2377 / 273-4).